Here is a 600-residue protein sequence, read N- to C-terminus: MCGIVGYIGYQDVKEILLRGLEKLEYRGYDSAGIAVLNESGVHVFKEKGRIADLRRIVDPNVNATVGIGHTRWATHGAPSRVNAHPHQSASGRFTLVHNGVIENYEMVKRDYLADVAFQSDTDTEVIVQLVEKFVRDGLTTEEAFRKTLSLLKGSYAIAMIDAQDENTIYAAKNKSPLLVGLGDGFNVVASDAMAMLQVTNQFVELMDGELVIVTSENVTIQTLNGETVKRKPFTAELDASDIEKGTYPHYMLKEIDEQPFVIRRIIQKYQDDNGELAIDKAIINEVLNADRLYIVACGTSYHAGLVGKQLIESWAKIPVEVHIASEFSYNMPLLSEKPLFIFISQSGETADSRAVLVQTNKLGYKAITITNVPGSTLSREADYTLLLHAGPEIAVASTKAYTAQIAVLAILAAAAAKAKGFELDFDLTKELAIVANVMEMLCDAKEEMEKIASDYLTLTRNCFFIGRAVDYYVCLEGALKLKEISYIQAEGFAGGELKHGTIALIEDGTPVIALATQEHVNLSIRGNVKEVVARGANPCVISMRGLEGDGDRFIIPAVHPDLTPLVSVVPLQLIAYYAALHRGCDVDKPRNLAKSVTVE.

Residue Cys2 is the Nucleophile; for GATase activity of the active site. Positions Cys2–Glu217 constitute a Glutamine amidotransferase type-2 domain. 2 consecutive SIS domains span residues Ile283–Phe422 and Ile452–Pro590. The active-site For Fru-6P isomerization activity is Lys595.

In terms of assembly, homodimer.

Its subcellular location is the cytoplasm. It catalyses the reaction D-fructose 6-phosphate + L-glutamine = D-glucosamine 6-phosphate + L-glutamate. Catalyzes the first step in hexosamine metabolism, converting fructose-6P into glucosamine-6P using glutamine as a nitrogen source. The protein is Glutamine--fructose-6-phosphate aminotransferase [isomerizing] of Geobacillus kaustophilus (strain HTA426).